The chain runs to 504 residues: Cytochrome P450 4A25 (504 aa).

A run of 2 helical transmembrane segments spans residues 6-26 and 110-130; these read LASASGLLQVASLLGLLLLLL and APVLYRLLIPWIGCGLLLLNG. Cysteine 451 contacts heme.

It belongs to the cytochrome P450 family. Requires heme as cofactor.

The protein resides in the endoplasmic reticulum membrane. It catalyses the reaction an omega-methyl-long-chain fatty acid + reduced [NADPH--hemoprotein reductase] + O2 = an omega-hydroxy-long-chain fatty acid + oxidized [NADPH--hemoprotein reductase] + H2O + H(+). In terms of biological role, catalyzes the omega- and (omega-1)-hydroxylation of various fatty acids such as laurate and palmitate. Has no activity toward taurochenodeoxycholic acid. The chain is Cytochrome P450 4A25 (CYP4A25) from Sus scrofa (Pig).